Reading from the N-terminus, the 121-residue chain is Large ribosomal subunit protein bL12 (121 aa).

Belongs to the bacterial ribosomal protein bL12 family. Homodimer. Part of the ribosomal stalk of the 50S ribosomal subunit. Forms a multimeric L10(L12)X complex, where L10 forms an elongated spine to which 2 to 4 L12 dimers bind in a sequential fashion. Binds GTP-bound translation factors.

In terms of biological role, forms part of the ribosomal stalk which helps the ribosome interact with GTP-bound translation factors. Is thus essential for accurate translation. The protein is Large ribosomal subunit protein bL12 of Aeromonas hydrophila subsp. hydrophila (strain ATCC 7966 / DSM 30187 / BCRC 13018 / CCUG 14551 / JCM 1027 / KCTC 2358 / NCIMB 9240 / NCTC 8049).